Here is a 204-residue protein sequence, read N- to C-terminus: Lysozyme g (204 aa).

The signal sequence occupies residues methionine 1–serine 19. 2 disulfides stabilise this stretch: cysteine 23-cysteine 79 and cysteine 37-cysteine 48. Active-site residues include glutamate 92 and aspartate 105.

This sequence belongs to the glycosyl hydrolase 23 family.

Its subcellular location is the secreted. It carries out the reaction Hydrolysis of (1-&gt;4)-beta-linkages between N-acetylmuramic acid and N-acetyl-D-glucosamine residues in a peptidoglycan and between N-acetyl-D-glucosamine residues in chitodextrins.. Its function is as follows. Has bacteriolytic activity against M.luteus. The polypeptide is Lysozyme g (Struthio camelus (Common ostrich)).